The following is a 367-amino-acid chain: Serine/threonine-protein phosphatase 2A activator 2 (367 aa).

This sequence belongs to the PTPA-type PPIase family.

It localises to the cytoplasm. It catalyses the reaction [protein]-peptidylproline (omega=180) = [protein]-peptidylproline (omega=0). Its function is as follows. PPIases accelerate the folding of proteins. It catalyzes the cis-trans isomerization of proline imidic peptide bonds in oligopeptides. Acts as a regulatory subunit for PP2A-like phosphatases modulating their activity or substrate specificity, probably by inducing a conformational change in the catalytic subunit, a direct target of the PPIase. Can reactivate inactive phosphatase PP2A-phosphatase methylesterase complexes (PP2Ai) in presence of ATP and Mg(2+) by dissociating the inactive form from the complex. This chain is Serine/threonine-protein phosphatase 2A activator 2 (RRD2), found in Debaryomyces hansenii (strain ATCC 36239 / CBS 767 / BCRC 21394 / JCM 1990 / NBRC 0083 / IGC 2968) (Yeast).